Here is a 157-residue protein sequence, read N- to C-terminus: MATTIDARALAAPLVEALLSTAAEQIRAAAPRIAGLPASDAAAVLPADLLPQVRNFLLTMVKEGLSGELNAVAEALQTYLETGRRVIDASVTSAIELSSEQQERITSELRRRYGDVHVTYHVDPTLIGGLIIRVGDQVLDNSLRARLSAVQRALQAS.

It belongs to the ATPase delta chain family. As to quaternary structure, F-type ATPases have 2 components, F(1) - the catalytic core - and F(0) - the membrane proton channel. F(1) has five subunits: alpha(3), beta(3), gamma(1), delta(1), epsilon(1). F(0) has three main subunits: a(1), b(2) and c(10-14). The alpha and beta chains form an alternating ring which encloses part of the gamma chain. F(1) is attached to F(0) by a central stalk formed by the gamma and epsilon chains, while a peripheral stalk is formed by the delta and b chains.

The protein resides in the cell membrane. Functionally, f(1)F(0) ATP synthase produces ATP from ADP in the presence of a proton or sodium gradient. F-type ATPases consist of two structural domains, F(1) containing the extramembraneous catalytic core and F(0) containing the membrane proton channel, linked together by a central stalk and a peripheral stalk. During catalysis, ATP synthesis in the catalytic domain of F(1) is coupled via a rotary mechanism of the central stalk subunits to proton translocation. This protein is part of the stalk that links CF(0) to CF(1). It either transmits conformational changes from CF(0) to CF(1) or is implicated in proton conduction. The sequence is that of ATP synthase subunit delta from Chloroflexus aggregans (strain MD-66 / DSM 9485).